We begin with the raw amino-acid sequence, 101 residues long: UPF0213 protein VC_A0739 (101 aa).

One can recognise a GIY-YIG domain in the interval 9-85 (SPWFVYLVRC…KALSKSQKEA (77 aa)).

This sequence belongs to the UPF0213 family.

The sequence is that of UPF0213 protein VC_A0739 from Vibrio cholerae serotype O1 (strain ATCC 39315 / El Tor Inaba N16961).